A 365-amino-acid polypeptide reads, in one-letter code: 2-aminoethylphosphonate--pyruvate transaminase (365 aa).

Residue Lys-194 is modified to N6-(pyridoxal phosphate)lysine.

It belongs to the class-V pyridoxal-phosphate-dependent aminotransferase family. PhnW subfamily. In terms of assembly, homodimer. Requires pyridoxal 5'-phosphate as cofactor.

It catalyses the reaction (2-aminoethyl)phosphonate + pyruvate = phosphonoacetaldehyde + L-alanine. In terms of biological role, involved in phosphonate degradation. The polypeptide is 2-aminoethylphosphonate--pyruvate transaminase (Bacillus cereus (strain G9842)).